The primary structure comprises 294 residues: tRNA dimethylallyltransferase (294 aa).

10–17 (GPTAVGKT) is a binding site for ATP. 12–17 (TAVGKT) contacts substrate. The interaction with substrate tRNA stretch occupies residues 35–38 (DSQQ).

This sequence belongs to the IPP transferase family. Monomer. It depends on Mg(2+) as a cofactor.

The enzyme catalyses adenosine(37) in tRNA + dimethylallyl diphosphate = N(6)-dimethylallyladenosine(37) in tRNA + diphosphate. Its function is as follows. Catalyzes the transfer of a dimethylallyl group onto the adenine at position 37 in tRNAs that read codons beginning with uridine, leading to the formation of N6-(dimethylallyl)adenosine (i(6)A). The polypeptide is tRNA dimethylallyltransferase (Streptococcus suis (strain 05ZYH33)).